Here is a 54-residue protein sequence, read N- to C-terminus: Large ribosomal subunit protein bL33 (54 aa).

The protein belongs to the bacterial ribosomal protein bL33 family.

The polypeptide is Large ribosomal subunit protein bL33 (Opitutus terrae (strain DSM 11246 / JCM 15787 / PB90-1)).